We begin with the raw amino-acid sequence, 447 residues long: Methylenetetrahydrofolate--tRNA-(uracil-5-)-methyltransferase TrmFO (447 aa).

8–13 (GGGLAG) is a binding site for FAD. The tract at residues 398 to 421 (NWGLVPAPPKRENGRRLGRQERRR) is disordered. A compositionally biased stretch (basic and acidic residues) spans 406–417 (PKRENGRRLGRQ).

This sequence belongs to the MnmG family. TrmFO subfamily. Requires FAD as cofactor.

It localises to the cytoplasm. The catalysed reaction is uridine(54) in tRNA + (6R)-5,10-methylene-5,6,7,8-tetrahydrofolate + NADH + H(+) = 5-methyluridine(54) in tRNA + (6S)-5,6,7,8-tetrahydrofolate + NAD(+). It catalyses the reaction uridine(54) in tRNA + (6R)-5,10-methylene-5,6,7,8-tetrahydrofolate + NADPH + H(+) = 5-methyluridine(54) in tRNA + (6S)-5,6,7,8-tetrahydrofolate + NADP(+). Catalyzes the folate-dependent formation of 5-methyl-uridine at position 54 (M-5-U54) in all tRNAs. This is Methylenetetrahydrofolate--tRNA-(uracil-5-)-methyltransferase TrmFO from Rubrobacter xylanophilus (strain DSM 9941 / JCM 11954 / NBRC 16129 / PRD-1).